The sequence spans 216 residues: Somatotropin (216 aa).

Positions 1 to 26 (MAAGPRTSVLLAFGLLCLPWPQDVGA) are cleaved as a signal peptide. His45 provides a ligand contact to Zn(2+). Cys78 and Cys189 form a disulfide bridge. Position 131 is a phosphoserine (Ser131). Glu198 is a Zn(2+) binding site. Cys206 and Cys214 are joined by a disulfide.

This sequence belongs to the somatotropin/prolactin family.

It is found in the secreted. Its function is as follows. Plays an important role in growth control. Its major role in stimulating body growth is to stimulate the liver and other tissues to secrete IGF1. It stimulates both the differentiation and proliferation of myoblasts. It also stimulates amino acid uptake and protein synthesis in muscle and other tissues. The sequence is that of Somatotropin (GH1) from Equus caballus (Horse).